The primary structure comprises 811 residues: Endothelin-converting enzyme 2 (811 aa).

Residues M1–E106 lie on the Cytoplasmic side of the membrane. The segment at L22 to R64 is disordered. The helical; Signal-anchor for type II membrane protein transmembrane segment at L107 to L127 threads the bilayer. Topologically, residues G128 to W811 are lumenal. One can recognise a Peptidase M13 domain in the interval T139 to W811. Cystine bridges form between C140–C145, C163–C796, C171–C756, C227–C476, and C685–C808. 7 N-linked (GlcNAc...) asparagine glycosylation sites follow: N207, N211, N252, N312, N357, N424, and N580. H648 contributes to the Zn(2+) binding site. Residue E649 is part of the active site. H652 lines the Zn(2+) pocket. 2 N-linked (GlcNAc...) asparagine glycosylation sites follow: N673 and N681. E708 is a binding site for Zn(2+). D712 (proton donor) is an active-site residue.

Belongs to the peptidase M13 family. Zn(2+) is required as a cofactor.

It localises to the golgi apparatus membrane. Its subcellular location is the cytoplasmic vesicle. The protein localises to the secretory vesicle membrane. The enzyme catalyses Hydrolysis of the 21-Trp-|-Val-22 bond in big endothelin to form endothelin 1.. Converts big endothelin-1 to endothelin-1. Also involved in the processing of various neuroendocrine peptides, including neurotensin, angiotensin I, substance P, proenkephalin-derived peptides, and prodynorphin-derived peptides. May play a role in amyloid-beta processing. The polypeptide is Endothelin-converting enzyme 2 (Homo sapiens (Human)).